A 515-amino-acid polypeptide reads, in one-letter code: Galactokinase (515 aa).

The alpha-D-galactose site is built by arginine 48, aspartate 54, histidine 55, and aspartate 57. Residues glycine 155, glycine 157, serine 159, and serine 160 each coordinate ATP. Aspartate 205 contacts alpha-D-galactose. Aspartate 205 functions as the Proton acceptor in the catalytic mechanism. ATP contacts are provided by serine 249, asparagine 250, and lysine 251. Tyrosine 259 contributes to the alpha-D-galactose binding site.

It belongs to the GHMP kinase family. GalK subfamily.

The catalysed reaction is alpha-D-galactose + ATP = alpha-D-galactose 1-phosphate + ADP + H(+). It participates in carbohydrate metabolism; galactose metabolism. Galactokinase is a key enzyme in the galactose metabolism where it catalyzes the conversion of alpha-D-galactose to galactose 1-phosphate. Can also induce the transcription of the gal genes in response to the organism being challenged with galactose as the sole source of carbon. This Candida albicans (Yeast) protein is Galactokinase.